A 672-amino-acid polypeptide reads, in one-letter code: Spermatid perinuclear RNA-binding protein (672 aa).

Residues 5 to 363 enclose the DZF domain; it reads RSFANDDRHV…ALKRPFEDGL (359 aa). 2 disordered regions span residues 52 to 73 and 349 to 371; these read TNKG…GENY and GAGS…DPNK. The segment covering 357–371 has biased composition (basic and acidic residues); sequence RPFEDGLGDDKDPNK. The DRBM 1 domain maps to 387-453; that stretch reads DLMNALMRLN…AVKVLQAMGY (67 aa). Basic and acidic residues predominate over residues 466–476; it reads SDEKSDNESKN. The segment at 466 to 499 is disordered; it reads SDEKSDNESKNETVSSNSSNNTGNSTTETSSTLE. Low complexity predominate over residues 477–497; it reads ETVSSNSSNNTGNSTTETSST. One can recognise a DRBM 2 domain in the interval 510–576; it reads SGKNPVMELN…ALAALEKLFS (67 aa). 2 positions are modified to asymmetric dimethylarginine: R612 and R617.

Interacts with EIF2AK2. Associates with microtubules; it is unsure whether such interaction is direct or indirect.

The protein localises to the cytoplasm. Functionally, involved in spermatogenesis and sperm function. Plays a role in regulation of cell growth. Binds to double-stranded DNA and RNA. Binds most efficiently to poly(I:C) RNA than to poly(dI:dC) DNA. Binds also to single-stranded poly(G) RNA. Binds non-specifically to the mRNA PRM1 3'-UTR and adenovirus VA RNA. This Homo sapiens (Human) protein is Spermatid perinuclear RNA-binding protein (STRBP).